The primary structure comprises 361 residues: Zygote arrest protein 1 (361 aa).

Disordered regions lie at residues 1–23 (MFPASTFHPCPHPYPQATKAGDG), 98–128 (QPAGCRASPDARSGSCQPRGHAGAGRSPRSW), and 148–252 (VAGG…EQDK). Position 154 is a phosphothreonine; by CDK1 (Thr154). Ser161 bears the Phosphoserine; by CDK1 mark. Residues 168–177 (REPEPREVAA) show a composition bias toward basic and acidic residues. Residues 263–346 (KYGYYHCKDC…RQDLCGRCKD (84 aa)) form a 3CxxC-type zinc finger.

This sequence belongs to the ZAR1 family. In terms of assembly, interacts with YBX2. Phosphorylation by CDK1 does not regulate formation of MARDO (mitochondria-associated ribonucleoprotein domain) membraneless compartment. Post-translationally, ubiquitinated and degradaded by the proteasome during oocyte meiotic maturation, leading to MARDO (mitochondria-associated ribonucleoprotein domain) membraneless compartment dissolution. As to expression, ovary. Expressed in primary oocytes (from primary through antral follicle stages) and during the progression from Meiosis I to Meiosis II. The mRNA is detected in growing oocytes (early primary follicle, type 3a) through fully grown oocytes (antral follicle, type 8).

It localises to the cytoplasm. The protein localises to the cytoplasmic ribonucleoprotein granule. In terms of biological role, mRNA-binding protein that mediates formation of MARDO (mitochondria-associated ribonucleoprotein domain), a membraneless compartment that stores maternal mRNAs in oocytes. MARDO assembly around mitochondria is directed by an increase in mitochondrial membrane potential during oocyte growth. Promotes formation of MARDO phase-separated membraneless compartment by undergoing liquid-liquid phase separation upon binding to maternal mRNAs. Binds to the 3'-UTR of maternal mRNAs. Maternal mRNAs stored in the MARDO are translationally repressed. Essential for female fertility and oocyte-to-embryo transition by coordinating maternal mRNA storage, translation and degradation. This Mus musculus (Mouse) protein is Zygote arrest protein 1.